Consider the following 468-residue polypeptide: ATP synthase subunit beta (468 aa).

155-162 (GGAGVGKT) is an ATP binding site.

Belongs to the ATPase alpha/beta chains family. F-type ATPases have 2 components, CF(1) - the catalytic core - and CF(0) - the membrane proton channel. CF(1) has five subunits: alpha(3), beta(3), gamma(1), delta(1), epsilon(1). CF(0) has three main subunits: a(1), b(2) and c(9-12). The alpha and beta chains form an alternating ring which encloses part of the gamma chain. CF(1) is attached to CF(0) by a central stalk formed by the gamma and epsilon chains, while a peripheral stalk is formed by the delta and b chains.

The protein resides in the cell membrane. The enzyme catalyses ATP + H2O + 4 H(+)(in) = ADP + phosphate + 5 H(+)(out). Its function is as follows. Produces ATP from ADP in the presence of a proton gradient across the membrane. The catalytic sites are hosted primarily by the beta subunits. The polypeptide is ATP synthase subunit beta (Streptococcus gordonii (strain Challis / ATCC 35105 / BCRC 15272 / CH1 / DL1 / V288)).